The chain runs to 427 residues: Serine--tRNA ligase (427 aa).

233 to 235 contributes to the L-serine binding site; that stretch reads TGE. 264–266 serves as a coordination point for ATP; sequence RSE. Glutamate 287 serves as a coordination point for L-serine. 351 to 354 is an ATP binding site; it reads EVSS. Serine 387 provides a ligand contact to L-serine.

This sequence belongs to the class-II aminoacyl-tRNA synthetase family. Type-1 seryl-tRNA synthetase subfamily. As to quaternary structure, homodimer. The tRNA molecule binds across the dimer.

The protein localises to the cytoplasm. It catalyses the reaction tRNA(Ser) + L-serine + ATP = L-seryl-tRNA(Ser) + AMP + diphosphate + H(+). The catalysed reaction is tRNA(Sec) + L-serine + ATP = L-seryl-tRNA(Sec) + AMP + diphosphate + H(+). It functions in the pathway aminoacyl-tRNA biosynthesis; selenocysteinyl-tRNA(Sec) biosynthesis; L-seryl-tRNA(Sec) from L-serine and tRNA(Sec): step 1/1. Its function is as follows. Catalyzes the attachment of serine to tRNA(Ser). Is also able to aminoacylate tRNA(Sec) with serine, to form the misacylated tRNA L-seryl-tRNA(Sec), which will be further converted into selenocysteinyl-tRNA(Sec). The sequence is that of Serine--tRNA ligase from Buchnera aphidicola subsp. Acyrthosiphon pisum (strain 5A).